The primary structure comprises 395 residues: MNQTWRTHLQSKLQQLHERGQYRNLHVTEQAEETWLIRDEKRMLNLASNNYLGLAGDERLKEAAIACTRKYGTGATASRLVVGNYSLYEEVERSICDWKGTEKALVVNSGYTANIGVISSLVSRHDIVFSDKLNHASIVDGIILSGAEHKRYRHNDLDHLEKLLKTASPEQRKLIVTDTVFSMDGDTAYVRELVELKEKYGAILIVDEAHASGIYGSGGAGLSHIEEDLAQKIDIHMGTFSKALGCYGAYLTGDAIYIEYLHNMMRSFIFTTALPPGTLGAVQKAIEIVKEDNERRERLIENGAYFRNHLREAGFDIGNSSTHIVPIVVGSNETALRFSKRLQQVGIAAIAIRPPTVPVNSSRVRFAVTSQHTIADLQWAIHHIIRIGKEEGFFV.

Arg-23 is a substrate binding site. 110–111 (GY) is a pyridoxal 5'-phosphate binding site. His-135 serves as a coordination point for substrate. Residues Ser-182, 207–210 (DEAH), and 239–242 (TFSK) each bind pyridoxal 5'-phosphate. Position 242 is an N6-(pyridoxal phosphate)lysine (Lys-242). Thr-356 contributes to the substrate binding site.

The protein belongs to the class-II pyridoxal-phosphate-dependent aminotransferase family. BioF subfamily. In terms of assembly, homodimer. The cofactor is pyridoxal 5'-phosphate.

The enzyme catalyses 6-carboxyhexanoyl-[ACP] + L-alanine + H(+) = (8S)-8-amino-7-oxononanoate + holo-[ACP] + CO2. It participates in cofactor biosynthesis; biotin biosynthesis. Functionally, catalyzes the decarboxylative condensation of pimeloyl-[acyl-carrier protein] and L-alanine to produce 8-amino-7-oxononanoate (AON), [acyl-carrier protein], and carbon dioxide. The sequence is that of Putative 8-amino-7-oxononanoate synthase (bioF) from Bacillus cereus (strain ATCC 10987 / NRS 248).